A 186-amino-acid chain; its full sequence is Peptidyl-tRNA hydrolase (186 aa).

Tyrosine 13 contributes to the tRNA binding site. The Proton acceptor role is filled by histidine 18. 3 residues coordinate tRNA: tyrosine 59, asparagine 61, and asparagine 107.

Belongs to the PTH family. In terms of assembly, monomer.

The protein resides in the cytoplasm. The enzyme catalyses an N-acyl-L-alpha-aminoacyl-tRNA + H2O = an N-acyl-L-amino acid + a tRNA + H(+). Its function is as follows. Hydrolyzes ribosome-free peptidyl-tRNAs (with 1 or more amino acids incorporated), which drop off the ribosome during protein synthesis, or as a result of ribosome stalling. Catalyzes the release of premature peptidyl moieties from peptidyl-tRNA molecules trapped in stalled 50S ribosomal subunits, and thus maintains levels of free tRNAs and 50S ribosomes. The chain is Peptidyl-tRNA hydrolase from Thermotoga sp. (strain RQ2).